The sequence spans 189 residues: MKQMNYIINEENELRFFSIIESLLFASGEPLGLKDISEIIELNTLDTKEILQKMIREYEIEKRGIKLIEIEKKYQLVTKEENSCFIEQLLKTNSSQSLSQAALETLSIVAYKQPVTRVDVDEIRGVKSDRALQTLLQKSLIKETGRLDVPGRPILYSTTEEFLKHFGLESIKELPSLEELLEEFQEEDL.

It belongs to the ScpB family. Homodimer. Homodimerization may be required to stabilize the binding of ScpA to the Smc head domains. Component of a cohesin-like complex composed of ScpA, ScpB and the Smc homodimer, in which ScpA and ScpB bind to the head domain of Smc. The presence of the three proteins is required for the association of the complex with DNA.

It localises to the cytoplasm. Its function is as follows. Participates in chromosomal partition during cell division. May act via the formation of a condensin-like complex containing Smc and ScpA that pull DNA away from mid-cell into both cell halves. The polypeptide is Segregation and condensation protein B (Clostridium tetani (strain Massachusetts / E88)).